Consider the following 313-residue polypeptide: Proline-rich protein 3 (313 aa).

Residues 1–22 (MAITRSSLAICLILSLVTITTA) form the signal peptide. Positions 27–312 (PSSPPVYKSP…GPKAAPATPK (286 aa)) are 35 X 5 AA approximate repeats. 35 consecutive repeat copies span residues 30-34 (PPVYK), 35-39 (SPEHK), 40-43 (PTLP), 44-48 (SPVYT), 49-53 (PPVYK), 54-57 (PTLS), 58-62 (PPVYT), 64-67 (PTIP), 68-72 (PPVYT), 73-77 (PPVYK), 82-86 (PPVYT), 87-91 (KPTIP), 92-96 (PPVYT), 97-101 (PPVYK), 102-105 (PTLS), 106-110 (PPVYT), 111-115 (KPTIP), 116-120 (PPVYT), 121-125 (PPVYK), 126-131 (PTPVYT), 132-136 (KPTIP), 137-141 (PPVYT), 142-146 (PPVYK), 147-150 (PTPS), 151-155 (PPVYK), 157-163 (SPSYSSP), 164-168 (PPPYV), 169-174 (PKPTYT), 175-181 (PTTKPYV), 182-186 (PEILK), 187-229 (AVDG…VIYS), 258-262 (SPVET), 266-270 (PTNVN), 298-302 (PFYYT), and 308-312 (PATPK).

This sequence belongs to the plant proline-rich protein superfamily. ENOD12 family. In terms of tissue distribution, exclusively expressed in roots, particularly in root hairs-containing regions, and especially in root hairs.

It localises to the secreted. The protein resides in the cell wall. May contribute to cell wall structure in root hairs. This is Proline-rich protein 3 (PRP3) from Arabidopsis thaliana (Mouse-ear cress).